We begin with the raw amino-acid sequence, 615 residues long: Chaperone protein DnaK (615 aa).

Phosphothreonine; by autocatalysis is present on Thr195. Residues 592-615 are disordered; it reads EKGAQAASGKGPDDVIDADYKPAD.

It belongs to the heat shock protein 70 family.

Its function is as follows. Acts as a chaperone. This is Chaperone protein DnaK from Thermus thermophilus (strain ATCC BAA-163 / DSM 7039 / HB27).